The following is a 523-amino-acid chain: Glycerate kinase (523 aa).

S60 carries the post-translational modification Phosphoserine. K200 is subject to N6-acetyllysine.

This sequence belongs to the glycerate kinase type-2 family.

It is found in the cytoplasm. The enzyme catalyses (R)-glycerate + ATP = (2R)-3-phosphoglycerate + ADP + H(+). The sequence is that of Glycerate kinase (Glyctk) from Rattus norvegicus (Rat).